The chain runs to 483 residues: ATP synthase subunit beta (483 aa).

Gly168 to Thr175 lines the ATP pocket.

The protein belongs to the ATPase alpha/beta chains family. As to quaternary structure, F-type ATPases have 2 components, CF(1) - the catalytic core - and CF(0) - the membrane proton channel. CF(1) has five subunits: alpha(3), beta(3), gamma(1), delta(1), epsilon(1). CF(0) has three main subunits: a(1), b(2) and c(9-12). The alpha and beta chains form an alternating ring which encloses part of the gamma chain. CF(1) is attached to CF(0) by a central stalk formed by the gamma and epsilon chains, while a peripheral stalk is formed by the delta and b chains.

It is found in the cell membrane. It catalyses the reaction ATP + H2O + 4 H(+)(in) = ADP + phosphate + 5 H(+)(out). Functionally, produces ATP from ADP in the presence of a proton gradient across the membrane. The catalytic sites are hosted primarily by the beta subunits. The polypeptide is ATP synthase subunit beta (Mycobacterium ulcerans (strain Agy99)).